The primary structure comprises 505 residues: Adenylosuccinate synthetase, chloroplastic (505 aa).

The transit peptide at 1-60 (MTTMNISTLRLDSNPITTSTKSTTHRSGALGYNGSYSCRLLQFQKKNKAPSIIVCSTKPL) directs the protein to the chloroplast. GTP-binding positions include 92 to 98 (GDEGKGK) and 120 to 122 (GHT). The active-site Proton acceptor is the aspartate 93. Mg(2+)-binding residues include aspartate 93 and glycine 120. Residues 93–96 (DEGK), 118–121 (NAGH), threonine 210, arginine 224, glutamine 304, threonine 319, and arginine 383 contribute to the IMP site. Residue histidine 121 is the Proton donor of the active site. 379 to 385 (TTTGRPR) provides a ligand contact to substrate. Residues arginine 385, 411–413 (KLD), and 494–496 (GVG) contribute to the GTP site.

The protein belongs to the adenylosuccinate synthetase family. In terms of assembly, homodimer. Mg(2+) is required as a cofactor.

The protein resides in the plastid. The protein localises to the chloroplast. The enzyme catalyses IMP + L-aspartate + GTP = N(6)-(1,2-dicarboxyethyl)-AMP + GDP + phosphate + 2 H(+). It participates in purine metabolism; AMP biosynthesis via de novo pathway; AMP from IMP: step 1/2. Its function is as follows. Plays an important role in the de novo pathway and in the salvage pathway of purine nucleotide biosynthesis. Catalyzes the first committed step in the biosynthesis of AMP from IMP. This chain is Adenylosuccinate synthetase, chloroplastic, found in Nicotiana tabacum (Common tobacco).